The primary structure comprises 789 residues: GDH/6PGL endoplasmic bifunctional protein (789 aa).

A signal peptide spans 1-16 (MLLAAMCLALLGCLQA). The residue at position 17 (glutamine 17) is a Pyrrolidone carboxylic acid. The hexose-6-phosphate dehydrogenase stretch occupies residues 17–524 (QELKGHVSII…GGQLTFSQQQ (508 aa)). NADP(+)-binding positions include 29–36 (GATGDLAK) and tyrosine 146. Asparagine 154 carries N-linked (GlcNAc...) asparagine glycosylation. Lysine 171 provides a ligand contact to NADP(+). Residues lysine 171, 201-205 (HYLGK), glutamate 240, and aspartate 259 contribute to the D-glucose 6-phosphate site. Position 205 is an N6-succinyllysine (lysine 205). Histidine 264 serves as the catalytic Proton acceptor. Residue asparagine 279 is glycosylated (N-linked (GlcNAc...) asparagine). 2 residues coordinate D-glucose 6-phosphate: lysine 357 and arginine 362. Arginine 367 lines the NADP(+) pocket. Lysine 424 bears the N6-succinyllysine mark. Residues 525–538 (LEVLIPDLGSVPKP) are linker. Positions 539–789 (SDFQVLGARY…WYMDYEAFLG (251 aa)) are 6-phosphogluconolactonase. Tryptophan 615 contacts NADP(+). N-linked (GlcNAc...) asparagine glycosylation occurs at asparagine 681.

The protein in the N-terminal section; belongs to the glucose-6-phosphate dehydrogenase family. This sequence in the C-terminal section; belongs to the glucosamine/galactosamine-6-phosphate isomerase family. 6-phosphogluconolactonase subfamily. As to quaternary structure, homodimer. Expressed in liver (at protein level). Expressed in muscles. Expressed in adipose tissues.

It is found in the endoplasmic reticulum lumen. It carries out the reaction D-glucose 6-phosphate + NAD(+) = 6-phospho-D-glucono-1,5-lactone + NADH + H(+). It catalyses the reaction D-glucose 6-phosphate + NADP(+) = 6-phospho-D-glucono-1,5-lactone + NADPH + H(+). The enzyme catalyses 6-phospho-D-glucono-1,5-lactone + H2O = 6-phospho-D-gluconate + H(+). The catalysed reaction is 2-deoxy-D-glucose 6-phosphate + NAD(+) = 2-deoxy-6-phospho-D-glucono-1,5-lactone + NADH + H(+). It carries out the reaction 2-deoxy-D-glucose 6-phosphate + NADP(+) = 2-deoxy-6-phospho-D-glucono-1,5-lactone + NADPH + H(+). It catalyses the reaction D-galactose 6-phosphate + NADP(+) = 6-phospho-D-galactono-1,5-lactone + NADPH + H(+). The enzyme catalyses D-galactose 6-phosphate + NAD(+) = 6-phospho-D-galactono-1,5-lactone + NADH + H(+). The catalysed reaction is D-glucosamine 6-phosphate + NADP(+) = 2-amino-2-deoxy-6-phospho-D-glucono-1,5-lactone + NADPH + 2 H(+). It carries out the reaction D-glucose + NAD(+) = D-glucono-1,5-lactone + NADH + H(+). It catalyses the reaction D-glucose + NADP(+) = D-glucono-1,5-lactone + NADPH + H(+). The enzyme catalyses D-glucose 6-sulfate + NADP(+) = 6-sulfo-D-glucono-1,5-lactone + NADPH + H(+). It participates in carbohydrate degradation; pentose phosphate pathway; D-ribulose 5-phosphate from D-glucose 6-phosphate (oxidative stage). The protein operates within carbohydrate degradation; pentose phosphate pathway; D-ribulose 5-phosphate from D-glucose 6-phosphate (oxidative stage): step 2/3. Its function is as follows. Bifunctional enzyme localized in the lumen of the endoplasmic reticulum that catalyzes the first two steps of the oxidative branch of the pentose phosphate pathway/shunt, an alternative to glycolysis and a major source of reducing power and metabolic intermediates for biosynthetic processes. Has a hexose-6-phosphate dehydrogenase activity, with broad substrate specificity compared to glucose-6-phosphate 1-dehydrogenase/G6PD, and catalyzes the first step of the pentose phosphate pathway. In addition, acts as a 6-phosphogluconolactonase and catalyzes the second step of the pentose phosphate pathway. May have a dehydrogenase activity for alternative substrates including glucosamine 6-phosphate and glucose 6-sulfate. The main function of this enzyme is to provide reducing equivalents such as NADPH to maintain the adequate levels of reductive cofactors in the oxidizing environment of the endoplasmic reticulum. By producing NADPH that is needed by reductases of the lumen of the endoplasmic reticulum like corticosteroid 11-beta-dehydrogenase isozyme 1/HSD11B1, indirectly regulates their activity. This Mus musculus (Mouse) protein is GDH/6PGL endoplasmic bifunctional protein.